The sequence spans 768 residues: Calcium up-regulated protein G (768 aa).

The segment at 1–22 (MINIEDISKSSNQSEEKQLKST) is disordered. 2 Ricin B-type lectin domains span residues 1 to 107 (MINI…WTID) and 100 to 248 (KTQI…WGIN).

It belongs to the cup family.

Its subcellular location is the cytoplasm. It is found in the membrane. Functionally, may play an important role in stabilizing and/or regulating the cell membrane during Ca(2+) stress or certain stages of development. This chain is Calcium up-regulated protein G (cupG), found in Dictyostelium discoideum (Social amoeba).